A 1404-amino-acid polypeptide reads, in one-letter code: DNA-directed RNA polymerase subunit beta' (1404 aa).

Zn(2+) contacts are provided by cysteine 70, cysteine 72, cysteine 85, and cysteine 88. Residues aspartate 460, aspartate 462, and aspartate 464 each contribute to the Mg(2+) site. Zn(2+) is bound by residues cysteine 814, cysteine 889, cysteine 896, and cysteine 899. Residues 1377 to 1404 (DSEMETLSGKPAAAEPVAAVADAGADEE) are disordered. Positions 1387 to 1404 (PAAAEPVAAVADAGADEE) are enriched in low complexity.

It belongs to the RNA polymerase beta' chain family. The RNAP catalytic core consists of 2 alpha, 1 beta, 1 beta' and 1 omega subunit. When a sigma factor is associated with the core the holoenzyme is formed, which can initiate transcription. The cofactor is Mg(2+). Requires Zn(2+) as cofactor.

The enzyme catalyses RNA(n) + a ribonucleoside 5'-triphosphate = RNA(n+1) + diphosphate. DNA-dependent RNA polymerase catalyzes the transcription of DNA into RNA using the four ribonucleoside triphosphates as substrates. In Xanthomonas euvesicatoria pv. vesicatoria (strain 85-10) (Xanthomonas campestris pv. vesicatoria), this protein is DNA-directed RNA polymerase subunit beta'.